Reading from the N-terminus, the 467-residue chain is Cysteine--tRNA ligase (467 aa).

Cys27 is a binding site for Zn(2+). The 'HIGH' region signature appears at 29–39; it reads PTVYNYIHIGN. Residues Cys207, His232, and Glu236 each contribute to the Zn(2+) site. The 'KMSKS' region motif lies at 264 to 268; it reads KMSKS. ATP is bound at residue Lys267.

Belongs to the class-I aminoacyl-tRNA synthetase family. In terms of assembly, monomer. Zn(2+) is required as a cofactor.

It is found in the cytoplasm. The enzyme catalyses tRNA(Cys) + L-cysteine + ATP = L-cysteinyl-tRNA(Cys) + AMP + diphosphate. This Caldanaerobacter subterraneus subsp. tengcongensis (strain DSM 15242 / JCM 11007 / NBRC 100824 / MB4) (Thermoanaerobacter tengcongensis) protein is Cysteine--tRNA ligase.